The chain runs to 429 residues: Adenylosuccinate synthetase (429 aa).

GTP contacts are provided by residues 12-18 and 40-42; these read GDEGKGK and GHT. Catalysis depends on D13, which acts as the Proton acceptor. The Mg(2+) site is built by D13 and G40. IMP-binding positions include 13–16, 38–41, T128, R142, Q223, T238, and R302; these read DEGK and NAGH. H41 (proton donor) is an active-site residue. Position 298-304 (298-304) interacts with substrate; the sequence is TTTGRPR. GTP contacts are provided by residues R304, 330–332, and 412–414; these read SID and SVG.

It belongs to the adenylosuccinate synthetase family. As to quaternary structure, homodimer. It depends on Mg(2+) as a cofactor.

It is found in the cytoplasm. The enzyme catalyses IMP + L-aspartate + GTP = N(6)-(1,2-dicarboxyethyl)-AMP + GDP + phosphate + 2 H(+). It participates in purine metabolism; AMP biosynthesis via de novo pathway; AMP from IMP: step 1/2. Plays an important role in the de novo pathway of purine nucleotide biosynthesis. Catalyzes the first committed step in the biosynthesis of AMP from IMP. The chain is Adenylosuccinate synthetase from Bacillus cereus (strain ZK / E33L).